Consider the following 338-residue polypeptide: Beta-ketoacyl-[acyl-carrier-protein] synthase III (338 aa).

Catalysis depends on residues Cys-119 and His-261. Residues 262 to 266 (QANQR) form an ACP-binding region. Asn-291 is a catalytic residue.

This sequence belongs to the thiolase-like superfamily. FabH family. In terms of assembly, homodimer.

It localises to the cytoplasm. It carries out the reaction malonyl-[ACP] + acetyl-CoA + H(+) = 3-oxobutanoyl-[ACP] + CO2 + CoA. It functions in the pathway lipid metabolism; fatty acid biosynthesis. Catalyzes the condensation reaction of fatty acid synthesis by the addition to an acyl acceptor of two carbons from malonyl-ACP. Catalyzes the first condensation reaction which initiates fatty acid synthesis and may therefore play a role in governing the total rate of fatty acid production. Possesses both acetoacetyl-ACP synthase and acetyl transacylase activities. Its substrate specificity determines the biosynthesis of branched-chain and/or straight-chain of fatty acids. This Prochlorococcus marinus (strain NATL2A) protein is Beta-ketoacyl-[acyl-carrier-protein] synthase III.